A 131-amino-acid chain; its full sequence is Pancreatic polypeptide prohormone (131 aa).

Residues 1-29 (MAAAHRCLFLLLLSTCVALLLQPPLGALG) form the signal peptide. Y65 is modified (tyrosine amide).

Belongs to the NPY family.

It is found in the secreted. Its function is as follows. Hormone secreted by pancreatic cells that acts as a regulator of pancreatic and gastrointestinal functions probably by signaling through the G protein-coupled receptor NPY4R2. The polypeptide is Pancreatic polypeptide prohormone (PPY) (Bos taurus (Bovine)).